The following is a 737-amino-acid chain: Protein OPG064 (737 aa).

M1 is subject to N-acetylmethionine; by host. C496 and C535 are disulfide-bonded.

Belongs to the orthopoxvirus OPG064 family. As to quaternary structure, interacts with host KLC2; this interaction promotes IEV trafficking by engaging the host kinesin-1 complex. Interacts with protein OPG056. N-acetylated on initiator methionine by host.

Functionally, plays a role in intracellular enveloped virus (IEV) transport to the cell surface on microtubules. Together with protein OPG056, forms a complex that interacts with host KLC2 (kinesin light chain isoform 2) to engage the kinesin-1 complex and thereby promote IEV trafficking. This is Protein OPG064 (OPG064) from Monkeypox virus.